Reading from the N-terminus, the 599-residue chain is ATP-binding cassette sub-family E member 1 (599 aa).

4Fe-4S ferredoxin-type domains are found at residues 7-37 (RIAI…MGKL) and 46-75 (KIAW…IVNL). Residue K20 forms a Glycyl lysine isopeptide (Lys-Gly) (interchain with G-Cter in ubiquitin) linkage. ABC transporter domains follow at residues 79-315 (LEKE…FLDG) and 342-562 (VKKM…LSQL). Residues 110–117 (GTNGIGKS) and 379–386 (GENGTGKT) each bind ATP. Position 417 is a phosphoserine (S417). Phosphothreonine is present on T550.

It belongs to the ABC transporter superfamily. ABCE family. As to quaternary structure, (Microbial infection) Interacts with Chandipura virus matrix protein. In terms of assembly, interacts with PINK1. Interacts with CNOT4. Interacts with PELO. Probably heterodimerizes with RNASEL; this interaction inhibits RNASEL. (Microbial infection) Interacts with HIV-1 proteins Vif and Gag. As to quaternary structure, (Microbial infection) Interacts with HIV-2 protein Gag. Ubiquitinated by CNOT4. Ubiquitination mediates the recruitment of autophagy receptors to the mitochondrial outer membrane and initiates mitophagy.

The protein localises to the cytoplasm. It localises to the mitochondrion. The enzyme catalyses GTP + H2O = GDP + phosphate + H(+). It catalyses the reaction ATP + H2O = ADP + phosphate + H(+). The catalysed reaction is CTP + H2O = CDP + phosphate + H(+). It carries out the reaction UTP + H2O = UDP + phosphate + H(+). Functionally, nucleoside-triphosphatase (NTPase) involved in ribosome recycling by mediating ribosome disassembly. Able to hydrolyze ATP, GTP, UTP and CTP. Splits ribosomes into free 60S subunits and tRNA- and mRNA-bound 40S subunits. Acts either after canonical termination facilitated by release factors (ETF1/eRF1) or after recognition of stalled and vacant ribosomes by mRNA surveillance factors (PELO/Pelota). Involved in the No-Go Decay (NGD) pathway: recruited to stalled ribosomes by the Pelota-HBS1L complex, and drives the disassembly of stalled ribosomes, followed by degradation of damaged mRNAs as part of the NGD pathway. Also plays a role in quality control of translation of mitochondrial outer membrane-localized mRNA. As part of the PINK1-regulated signaling, ubiquitinated by CNOT4 upon mitochondria damage; this modification generates polyubiquitin signals that recruit autophagy receptors to the mitochondrial outer membrane and initiate mitophagy. RNASEL-specific protein inhibitor which antagonizes the binding of 2-5A (5'-phosphorylated 2',5'-linked oligoadenylates) to RNASEL. Negative regulator of the anti-viral effect of the interferon-regulated 2-5A/RNASEL pathway. In terms of biological role, (Microbial infection) May act as a chaperone for post-translational events during HIV-1 capsid assembly. (Microbial infection) Plays a role in the down-regulation of the 2-5A/RNASEL pathway during encephalomyocarditis virus (EMCV) and HIV-1 infections. This is ATP-binding cassette sub-family E member 1 (ABCE1) from Homo sapiens (Human).